The primary structure comprises 304 residues: Eukaryotic translation initiation factor 2 subunit alpha (304 aa).

One can recognise an S1 motif domain in the interval 17–88 (DDIVMVNVQQ…EKGYIDLSKR (72 aa)). At S52 the chain carries Phosphoserine; by GCN2. The interval 283–304 (LESKELDNRSDSEDDEDESDDE) is disordered. The span at 284–293 (ESKELDNRSD) shows a compositional bias: basic and acidic residues. Phosphoserine occurs at positions 292 and 294. Over residues 294–304 (SEDDEDESDDE) the composition is skewed to acidic residues.

It belongs to the eIF-2-alpha family. In terms of assembly, eukaryotic translation initiation factor 2 eIF2 is a heterotrimeric complex composed of an alpha, a beta and a gamma subunit. The factors eIF-1, eIF-2, eIF-3, TIF5/eIF-5 and methionyl-tRNAi form a multifactor complex (MFC) that may bind to the 40S ribosome. Interacts with CDC123; the interaction is direct. Interacts with GCD1. Post-translationally, phosphorylated; phosphorylation on Ser-52 by the GCN2 protein kinase occurs in response to low amino acid, carbon, or purine availability. Phosphorylation inhibits the guanine nucleotide exchange factor activity of the eIF2B complex.

Its subcellular location is the cytoplasm. It is found in the cytosol. Its function is as follows. eIF-2 functions in the early steps of protein synthesis by forming a ternary complex with GTP and initiator tRNA. This complex binds to a 40S ribosomal subunit, followed by mRNA binding to form a 43S pre-initiation complex. Junction of the 60S ribosomal subunit to form the 80S initiation complex is preceded by hydrolysis of the GTP bound to eIF-2 and release of an eIF-2-GDP binary complex. In order for eIF-2 to recycle and catalyze another round of initiation, the GDP bound to eIF-2 must exchange with GTP by way of a reaction catalyzed by eIF2B. The sequence is that of Eukaryotic translation initiation factor 2 subunit alpha from Saccharomyces cerevisiae (strain ATCC 204508 / S288c) (Baker's yeast).